The sequence spans 481 residues: Flavonol 3-O-glucosyltransferase UGT71C1 (481 aa).

The active-site Proton acceptor is the His19. Residue His19 participates in an anthocyanidin binding. Asp131 serves as the catalytic Charge relay. Positions 153, 352, 354, 369, 372, 373, 374, and 377 each coordinate UDP-alpha-D-glucose. Ala392 is an an anthocyanidin binding site. UDP-alpha-D-glucose is bound by residues Glu393 and Gln394.

The protein belongs to the UDP-glycosyltransferase family.

It catalyses the reaction a flavonol + UDP-alpha-D-glucose = a flavonol 3-O-beta-D-glucoside + UDP + H(+). The catalysed reaction is a 7-O-hydroxy-flavonol + UDP-alpha-D-glucose = a flavonol 7-O-beta-D-glucoside + UDP + H(+). Possesses quercetin 7-O-glucosyltransferase and 3'-O-glucosyltransferase activities in vitro. Also active in vitro on benzoates and benzoate derivatives. Glucosylates other secondary metabolites in vitro like trans-resveratrol, curcumin, vanillin and etoposide. This Arabidopsis thaliana (Mouse-ear cress) protein is Flavonol 3-O-glucosyltransferase UGT71C1.